The sequence spans 105 residues: Large ribosomal subunit protein uL24 (105 aa).

The protein belongs to the universal ribosomal protein uL24 family. In terms of assembly, part of the 50S ribosomal subunit.

One of two assembly initiator proteins, it binds directly to the 5'-end of the 23S rRNA, where it nucleates assembly of the 50S subunit. In terms of biological role, one of the proteins that surrounds the polypeptide exit tunnel on the outside of the subunit. The sequence is that of Large ribosomal subunit protein uL24 from Thioalkalivibrio sulfidiphilus (strain HL-EbGR7).